Reading from the N-terminus, the 218-residue chain is LOB domain-containing protein 29 (218 aa).

One can recognise an LOB domain in the interval 10 to 112 (SPCGACKFLR…AELEILKQQA (103 aa)).

This sequence belongs to the LOB domain-containing protein family. As to expression, expressed in roots.

Functionally, involved in lateral root formation. Regulated by the transcriptional activators ARF7 and ARF19. The protein is LOB domain-containing protein 29 (LBD29) of Arabidopsis thaliana (Mouse-ear cress).